Here is a 44-residue protein sequence, read N- to C-terminus: Small ribosomal subunit protein eS31 (44 aa).

Residues C18, C21, C35, and C38 each coordinate Zn(2+). The C4-type zinc finger occupies 18–38; the sequence is CPRCGDTFLAAHDDRQVCGRC.

The protein belongs to the eukaryotic ribosomal protein eS31 family. As to quaternary structure, part of the 30S ribosomal subunit. It depends on Zn(2+) as a cofactor.

The chain is Small ribosomal subunit protein eS31 from Halobacterium salinarum (strain ATCC 29341 / DSM 671 / R1).